The primary structure comprises 728 residues: E3 ubiquitin-protein ligase TRIM36 (728 aa).

The RING-type; degenerate zinc-finger motif lies at 33-84 (CPACKELFTHPLILPCQHSICHKCVKELLLTLDDSFNDVGSDNSNQSSPRLR). 2 consecutive B box-type zinc fingers follow at residues 154 to 192 (AIMC…WGTI) and 207 to 249 (PKIL…VTTM). Residues C212, H215, C235, and H241 each contribute to the Zn(2+) site. The stretch at 271–345 (ESQVKSQISE…MEEYQGLLEN (75 aa)) forms a coiled coil. The COS domain occupies 356-413 (LKETDQSCFVQTAKQLHLRIQKATESLKSFRPAAQTSFEDYVVNTSKQTELLGELSFF). Residues 419 to 510 (VPEINEEQSK…RELILHTPPA (92 aa)) form the Fibronectin type-III domain. The region spanning 508–720 (PPAPVFSFLF…IQLEEPITAK (213 aa)) is the B30.2/SPRY domain.

The protein belongs to the TRIM/RBCC family. Interacts with CENPH. In terms of tissue distribution, highly expressed in testis, prostate and brain. Weakly expressed in kidney, lung and heart. Expressed in fetal tissues.

Its subcellular location is the cytoplasm. The protein resides in the cytoplasmic vesicle. It is found in the secretory vesicle. It localises to the acrosome. The protein localises to the cytoskeleton. It carries out the reaction S-ubiquitinyl-[E2 ubiquitin-conjugating enzyme]-L-cysteine + [acceptor protein]-L-lysine = [E2 ubiquitin-conjugating enzyme]-L-cysteine + N(6)-ubiquitinyl-[acceptor protein]-L-lysine.. E3 ubiquitin-protein ligase which mediates ubiquitination and subsequent proteasomal degradation of target proteins. Involved in chromosome segregation and cell cycle regulation. May play a role in the acrosome reaction and fertilization. The protein is E3 ubiquitin-protein ligase TRIM36 (TRIM36) of Homo sapiens (Human).